The primary structure comprises 526 residues: Fatty-acid amide hydrolase 2-B (526 aa).

The chain crosses the membrane as a helical span at residues 12–32 (CLLVLVSGLFLALFRLLSPGT). Catalysis depends on charge relay system residues Lys128 and Ser203. Residue Ser227 is the Acyl-ester intermediate of the active site.

It belongs to the amidase family.

It localises to the membrane. The catalysed reaction is N-(5Z,8Z,11Z,14Z-eicosatetraenoyl)-ethanolamine + H2O = ethanolamine + (5Z,8Z,11Z,14Z)-eicosatetraenoate. It catalyses the reaction (9Z)-octadecenamide + H2O = (9Z)-octadecenoate + NH4(+). This is Fatty-acid amide hydrolase 2-B (faah2b) from Danio rerio (Zebrafish).